A 1349-amino-acid chain; its full sequence is Adhesion G protein-coupled receptor F5 (1349 aa).

Positions 1–24 (MKSSRTVTLYFVLIVICSSEATWS) are cleaved as a signal peptide. Residues 25–1016 (RPAEPIVHPL…PGSLLKILLD (992 aa)) are Extracellular-facing. N-linked (GlcNAc...) asparagine glycans are attached at residues Asn73, Asn94, Asn185, Asn254, Asn270, Asn286, Asn299, Asn326, Asn337, Asn349, Asn396, Asn470, Asn503, Asn538, Asn649, and Asn666. Residues 163–271 (PETYITLKIK…NSFQGTPSNE (109 aa)) form the SEA domain. 3 Ig-like domains span residues 268-366 (PSNE…LDVT), 367-464 (PIRI…IAVT), and 469-559 (ANLT…KDVT). A disulfide bridge links Cys291 with Cys348. A disulfide bridge connects residues Cys389 and Cys447. An intrachain disulfide couples Cys490 to Cys543. A Phosphoserine modification is found at Ser819. N-linked (GlcNAc...) asparagine glycosylation is found at Asn820, Asn958, and Asn963. The GAIN-B domain occupies 842 to 1006 (TPPFLFHPNV…SILMSPDSPD (165 aa)). Intrachain disulfides connect Cys954-Cys988 and Cys973-Cys990. Residues 954–1006 (CVFWNFSLANNTGGWDSSGCTVEDDGRDNRDRVFCKCNHLTSFSILMSPDSPD) are GPS. The segment at 994–1009 (TSFSILMSPDSPDPGS) is tethered agonist. The chain crosses the membrane as a helical span at residues 1017 to 1036 (IISYIGLGFSIVSLAACLVV). The Cytoplasmic segment spans residues 1037–1055 (EAMVWKSVTKNRTSYMRHI). A helical transmembrane segment spans residues 1056 to 1078 (CIVNIALCLLIADIWFIVAGAIH). Topologically, residues 1079–1097 (DGHYPLNETACVAATFFIH) are extracellular. An N-linked (GlcNAc...) asparagine glycan is attached at Asn1085. Residues 1098–1120 (FFYLSVFFWMLTLGLMLFYRLIF) form a helical membrane-spanning segment. At 1121 to 1131 (ILHDASKSTQK) the chain is on the cytoplasmic side. The chain crosses the membrane as a helical span at residues 1132–1154 (AIAFSLGYGCPLIISSITVGVTQ). The Extracellular segment spans residues 1155–1173 (PQEVYMRKNACWLNWEDTR). The chain crosses the membrane as a helical span at residues 1174–1196 (ALLAFAIPALIIVVVNVSITVVV). The Cytoplasmic segment spans residues 1197–1216 (ITKILRPSVGDKPGKQEKSS). Residues 1217 to 1239 (LFQISKSIGVLTPLLGLTWGFGL) form a helical membrane-spanning segment. Residues 1240-1248 (ATVIQGSNA) are Extracellular-facing. Residues 1249–1271 (VFHIIFTLLNAFQGLFILLFGCL) form a helical membrane-spanning segment. Topologically, residues 1272–1349 (WDQKVQEALL…NSSSAYSLLN (78 aa)) are cytoplasmic. At Thr1303 the chain carries Phosphothreonine. At Ser1310 the chain carries Phosphoserine. Positions 1329 to 1343 (STPETTSSSVENSSS) are enriched in low complexity. The disordered stretch occupies residues 1329-1349 (STPETTSSSVENSSSAYSLLN).

The protein belongs to the G-protein coupled receptor 2 family. Adhesion G-protein coupled receptor (ADGR) subfamily. In terms of assembly, homodimer; disulfide-linked. Heterodimer of 2 chains generated by proteolytic processing; the large extracellular N-terminal fragment and the membrane-bound C-terminal fragment predominantly remain associated and non-covalently linked. Fragment generates by the processing enzyme furin remains attached to the extracellular N-terminal fragment. Interacts (via N-terminal extracellular domain) with SFTPD. Highly glycosylated. Post-translationally, proteolytically cleaved at multiple sites: one in the GPS region of the GAIN-B domain (S1 site) and the other in the SEA domain (S2 site). The proteolytic cleavage at S1 site generates an extracellular subunit and a seven-transmembrane subunit. The proteolytic cleavage at S2 site generates a fragment that undergoes proteolytic cleavage by the processing enzyme furin. In terms of tissue distribution, highly expressed in the lung and to a much lesser extent in the kidney and heart. Dense localization in alveolar walls of the lung and in the intercalated cells of the collecting duct of the kidney.

It is found in the cell membrane. Its activity is regulated as follows. As an adhesion G protein-coupled receptor (aGPCR) exhibits a large N-terminal extracellular domain containing highly conserved GPCR autoproteolysis-inducing (GAIN) domain. During synthesis, intracellular autoproteolytic processing of nascent chain within the GAIN domain generates a mature protein, consisting of an N-terminal fragment that is non-covalently linked to the C-terminal fragment. The mature protein is routed to the plasma membrane where the N- and C-terminal fragments remain associated, forming the holoreceptor. Dissociation of the aGPCR fragments stimulates G protein signaling through the action of the tethered-peptide agonist stalk that is occluded within the GAIN domain in the holoreceptor form. This dissociation might be induced by ligand binding, such as that of sFNDC4. Receptor that plays a critical role in lung surfactant homeostasis. May play a role in controlling adipocyte function. In terms of biological role, adhesion G protein-coupled receptor. In alveolar type II (ATII or AT2) cells, required for normal lung surfactant homeostasis. Modulation of both surfactant secretion and uptake by ATII cells is mediated by the downstream activation of GNAQ/GNA11 proteins and may be a consequence of increased cortical F-actin assembly induced by ADGRF5 activation. In the kidney, may play a role in the regulation of acid excretion into the primary urine, possibly by regulating the surface expression of V-ATPase proton pump. As a receptor for soluble FNDC4 (sFNDC4), required for proper systemic glucose tolerance, specifically sensitizing white adipose tissue to insulin. Also plays a role in sFNDC4-induced decrease of local inflammation in white adipose tissue. In Rattus norvegicus (Rat), this protein is Adhesion G protein-coupled receptor F5 (Adgrf5).